A 78-amino-acid chain; its full sequence is Small integral membrane protein 1 (78 aa).

At Met1 the chain carries N-acetylmethionine. Residues 1–18 (MQPQESHVHYSRWEDGSR) are compositionally biased toward basic and acidic residues. The segment at 1–20 (MQPQESHVHYSRWEDGSRDG) is disordered. At 1-46 (MQPQESHVHYSRWEDGSRDGVSLGAVSSTEEASRCRRISQRLCTGK) the chain is on the cytoplasmic side. 4 positions are modified to phosphoserine: Ser6, Ser17, Ser22, and Ser27. The chain crosses the membrane as a helical; Signal-anchor for type II membrane protein span at residues 47 to 67 (LGIAMKVLGGVALFWIIFILG). At 68-78 (YLTGYYVHKCK) the chain is on the extracellular side. The segment at 68–78 (YLTGYYVHKCK) is displays the Vel antigen.

This sequence belongs to the SMIM1 family. In terms of assembly, homooligomer; disulfide-linked. As to expression, highly expressed in the bone marrow and expressed at lower levels in non-hematopoietic tissues. Highly expressed in erythroleukemia cell lines. Up-regulated in CD34+ hematopoietic progenitors cultured toward red blood cells.

Its subcellular location is the cell membrane. Functionally, regulator of red blood cell formation. The sequence is that of Small integral membrane protein 1 from Homo sapiens (Human).